The sequence spans 418 residues: MGQPGNRSVFLLAPNGSHAPDQDVPQERDEAWVVGMAIVMSLIVLAIVFGNVLVITAIAKFERLQTVTNYFITSLACADLVMGLAVVPFGASHILMKMWTFGSFWCEFWISIDVLCVTASIETLCVIAVDRYLAITSPFKYQCLLTKNKARVVILMVWVVSGLISFLPIKMHWYQATHREALNCYAEEACCDFFTNQPYAIASSIVSFYLPLVVMVFVYSRVFQVARRQLQKIDKSEGRFHAQNLSQAEQDGRSGPGHRRSSKFCLKEHKALKTLGIIMGTFTLCWLPFFIVNIVHGIHDNLIPKEVYILLNWVGYVNSAFNPLIYCRSPDFRMAFQELLCLHRSSLKAYGNGCSSNSNGRTDYTGEQSGCYLGEEKDSERLCEDAPGPEGCAHRQGTVPDDSTDSQGRNCSTNDSML.

The Extracellular portion of the chain corresponds to 1–34 (MGQPGNRSVFLLAPNGSHAPDQDVPQERDEAWVV). N-linked (GlcNAc...) asparagine glycans are attached at residues asparagine 6 and asparagine 15. A helical membrane pass occupies residues 35–58 (GMAIVMSLIVLAIVFGNVLVITAI). The Cytoplasmic portion of the chain corresponds to 59-71 (AKFERLQTVTNYF). A helical transmembrane segment spans residues 72–95 (ITSLACADLVMGLAVVPFGASHIL). Residues 96 to 106 (MKMWTFGSFWC) lie on the Extracellular side of the membrane. Disulfide bonds link cysteine 106–cysteine 191 and cysteine 184–cysteine 190. Residues 107-129 (EFWISIDVLCVTASIETLCVIAV) traverse the membrane as a helical segment. Topologically, residues 130 to 150 (DRYLAITSPFKYQCLLTKNKA) are cytoplasmic. Tyrosine 141 is subject to Phosphotyrosine. A helical transmembrane segment spans residues 151-174 (RVVILMVWVVSGLISFLPIKMHWY). The Extracellular segment spans residues 175–196 (QATHREALNCYAEEACCDFFTN). A helical membrane pass occupies residues 197–220 (QPYAIASSIVSFYLPLVVMVFVYS). Residues 221–274 (RVFQVARRQLQKIDKSEGRFHAQNLSQAEQDGRSGPGHRRSSKFCLKEHKALKT) are Cytoplasmic-facing. Serine 246 bears the Phosphoserine mark. 2 positions are modified to phosphoserine; by PKA: serine 261 and serine 262. A lipid anchor (S-palmitoyl cysteine) is attached at cysteine 265. A helical membrane pass occupies residues 275 to 298 (LGIIMGTFTLCWLPFFIVNIVHGI). Residues 299 to 305 (HDNLIPK) lie on the Extracellular side of the membrane. Residues 306 to 329 (EVYILLNWVGYVNSAFNPLIYCRS) form a helical membrane-spanning segment. Topologically, residues 330–418 (PDFRMAFQEL…RNCSTNDSML (89 aa)) are cytoplasmic. The S-palmitoyl cysteine moiety is linked to residue cysteine 341. Serine 345 and serine 346 each carry phosphoserine; by PKA. Phosphoserine; by BARK is present on residues serine 355 and serine 356. The interval 381–418 (RLCEDAPGPEGCAHRQGTVPDDSTDSQGRNCSTNDSML) is disordered. A 4-hydroxyproline mark is found at proline 387 and proline 400. Residues 405–418 (DSQGRNCSTNDSML) are compositionally biased toward polar residues. The PDZ-binding motif lies at 415–418 (DSML).

It belongs to the G-protein coupled receptor 1 family. Adrenergic receptor subfamily. ADRB2 sub-subfamily. As to quaternary structure, binds NHERF1 and GPRASP1. Interacts with ARRB1 and ARRB2. Interacts with SRC. Interacts with USP20 and USP33. Interacts with VHL; the interaction, which is increased on hydroxylation of ADRB2, ubiquitinates ADRB2 leading to its degradation. Interacts with EGLN3; the interaction hydroxylates ADRB2 facilitating VHL-E3 ligase-mediated ubiquitination. Interacts (via PDZ-binding motif) with SNX27 (via PDZ domain); the interaction is required when endocytosed to prevent degradation in lysosomes and promote recycling to the plasma membrane. Interacts with CNIH4. Interacts with ARRDC3. Interacts with NEDD4. Interacts with MARCHF2. Palmitoylated; may reduce accessibility of Ser-345 and Ser-346 by anchoring Cys-341 to the plasma membrane. Agonist stimulation promotes depalmitoylation and further allows Ser-345 and Ser-346 phosphorylation. In terms of processing, phosphorylated by PKA and BARK upon agonist stimulation, which mediates homologous desensitization of the receptor. PKA-mediated phosphorylation seems to facilitate phosphorylation by BARK. Post-translationally, phosphorylation of Tyr-141 is induced by insulin and leads to supersensitization of the receptor. Polyubiquitinated. Agonist-induced ubiquitination leads to sort internalized receptors to the lysosomes for degradation. Deubiquitination by USP20 and USP33, leads to ADRB2 recycling and resensitization after prolonged agonist stimulation. USP20 and USP33 are constitutively associated and are dissociated immediately after agonist stimulation. Ubiquitination by the VHL-E3 ligase complex is oxygen-dependent. In terms of processing, hydroxylation by EGLN3 occurs only under normoxia and increases the interaction with VHL and the subsequent ubiquitination and degradation of ADRB2. Post-translationally, palmitoylated. Mainly palmitoylated at Cys-341. Palmitoylation may reduce accessibility of phosphorylation sites by anchoring the receptor to the plasma membrane. Agonist stimulation promotes depalmitoylation and further allows Ser-345 and Ser-346 phosphorylation. Also undergoes transient, ligand-induced palmitoylation at Cys-265 probably by ZDHHC9, ZDHHC14 and ZDHHC18 within the Golgi. Palmitoylation at Cys-265 requires phosphorylation by PKA and receptor internalization and stabilizes the receptor. Could be depalmitoylated by LYPLA1 at the plasma membrane. Expressed in heart, liver, lung, skeletal muscle and subcutaneous adipose tissue.

The protein resides in the cell membrane. Its subcellular location is the early endosome. The protein localises to the golgi apparatus. In terms of biological role, beta-adrenergic receptors mediate the catecholamine-induced activation of adenylate cyclase through the action of G proteins. The beta-2-adrenergic receptor binds epinephrine with an approximately 30-fold greater affinity than it does norepinephrine. The chain is Beta-2 adrenergic receptor (ADRB2) from Sus scrofa (Pig).